The sequence spans 194 residues: Extracellular globin-E1 (194 aa).

Globin domains lie at 1-45 and 55-194; these read DISH…MGLS and GLSG…LRQA. Position 150 (histidine 150) interacts with heme b.

This sequence belongs to the globin family. As to quaternary structure, artemia hemoglobin is a dimer of two similar sized subunits. Each subunit represents a globin chain which exists in two forms (alpha and beta), thus making possible three different phenotypes (HB1, alpha(2), HB2, alpha/beta, HB3, beta(2)). The globin chain is a polymer of eight heme-binding covalently linked domains.

The protein is Extracellular globin-E1 of Artemia sp. (Brine shrimp).